We begin with the raw amino-acid sequence, 431 residues long: Glucose-1-phosphate adenylyltransferase (431 aa).

K39 serves as a coordination point for beta-D-fructose 1,6-bisphosphate. AMP-binding residues include R40, H46, and R52. An alpha-D-glucose 1-phosphate-binding site is contributed by Y114. Position 130 (R130) interacts with AMP. Residues G179, 194–195 (EK), and S212 each bind alpha-D-glucose 1-phosphate. AMP is bound by residues E370 and R386. Beta-D-fructose 1,6-bisphosphate is bound by residues 419–423 (REMLR) and 429–431 (QER).

This sequence belongs to the bacterial/plant glucose-1-phosphate adenylyltransferase family. As to quaternary structure, homotetramer.

The enzyme catalyses alpha-D-glucose 1-phosphate + ATP + H(+) = ADP-alpha-D-glucose + diphosphate. It functions in the pathway glycan biosynthesis; glycogen biosynthesis. Allosterically activated by fructose-1,6-bisphosphate (F16BP) and inhibited by AMP. Its function is as follows. Involved in the biosynthesis of ADP-glucose, a building block required for the elongation reactions to produce glycogen. Catalyzes the reaction between ATP and alpha-D-glucose 1-phosphate (G1P) to produce pyrophosphate and ADP-Glc. In Escherichia coli O45:K1 (strain S88 / ExPEC), this protein is Glucose-1-phosphate adenylyltransferase.